We begin with the raw amino-acid sequence, 20 residues long: Phenol-soluble modulin alpha 4 peptide (20 aa).

It belongs to the phenol-soluble modulin alpha peptides family.

In terms of biological role, peptide which can recruit, activate and subsequently lyse neutrophils, thus eliminating the main cellular defense against infection. The polypeptide is Phenol-soluble modulin alpha 4 peptide (psmA4) (Staphylococcus aureus (strain bovine RF122 / ET3-1)).